Consider the following 263-residue polypeptide: Acyl-[acyl-carrier-protein]--UDP-N-acetylglucosamine O-acyltransferase (263 aa).

The protein belongs to the transferase hexapeptide repeat family. LpxA subfamily. In terms of assembly, homotrimer.

The protein localises to the cytoplasm. It carries out the reaction a (3R)-hydroxyacyl-[ACP] + UDP-N-acetyl-alpha-D-glucosamine = a UDP-3-O-[(3R)-3-hydroxyacyl]-N-acetyl-alpha-D-glucosamine + holo-[ACP]. It participates in glycolipid biosynthesis; lipid IV(A) biosynthesis; lipid IV(A) from (3R)-3-hydroxytetradecanoyl-[acyl-carrier-protein] and UDP-N-acetyl-alpha-D-glucosamine: step 1/6. In terms of biological role, involved in the biosynthesis of lipid A, a phosphorylated glycolipid that anchors the lipopolysaccharide to the outer membrane of the cell. The sequence is that of Acyl-[acyl-carrier-protein]--UDP-N-acetylglucosamine O-acyltransferase from Tolumonas auensis (strain DSM 9187 / NBRC 110442 / TA 4).